The following is a 39-amino-acid chain: Cytochrome b559 subunit beta (39 aa).

A helical transmembrane segment spans residues 14–30 (WLAVHGLAVPTVFFLGS). H18 lines the heme pocket.

The protein belongs to the PsbE/PsbF family. As to quaternary structure, heterodimer of an alpha subunit and a beta subunit. PSII is composed of 1 copy each of membrane proteins PsbA, PsbB, PsbC, PsbD, PsbE, PsbF, PsbH, PsbI, PsbJ, PsbK, PsbL, PsbM, PsbT, PsbX, PsbY, PsbZ, Psb30/Ycf12, at least 3 peripheral proteins of the oxygen-evolving complex and a large number of cofactors. It forms dimeric complexes. Heme b is required as a cofactor.

It localises to the plastid. The protein localises to the chloroplast thylakoid membrane. This b-type cytochrome is tightly associated with the reaction center of photosystem II (PSII). PSII is a light-driven water:plastoquinone oxidoreductase that uses light energy to abstract electrons from H(2)O, generating O(2) and a proton gradient subsequently used for ATP formation. It consists of a core antenna complex that captures photons, and an electron transfer chain that converts photonic excitation into a charge separation. The protein is Cytochrome b559 subunit beta of Nicotiana glutinosa (Tobacco).